Consider the following 41-residue polypeptide: Photosystem I reaction center subunit VIII (41 aa).

A helical transmembrane segment spans residues 12-32 (WIMIPVTCWLFPVVVMGLLFI).

Belongs to the PsaI family.

It is found in the cellular thylakoid membrane. In terms of biological role, may help in the organization of the PsaL subunit. The chain is Photosystem I reaction center subunit VIII from Cyanothece sp. (strain PCC 7425 / ATCC 29141).